Here is a 392-residue protein sequence, read N- to C-terminus: Probable glucan endo-1,6-beta-glucosidase B (392 aa).

The signal sequence occupies residues 1–18; the sequence is MKVTRLAVLNTLATLTVA. N-linked (GlcNAc...) asparagine glycosylation is present at N31. The active-site Proton donor is E220. E322 serves as the catalytic Nucleophile.

It belongs to the glycosyl hydrolase 5 (cellulase A) family.

The protein resides in the secreted. The enzyme catalyses Random hydrolysis of (1-&gt;6)-linkages in (1-&gt;6)-beta-D-glucans.. Functionally, beta-glucanases participate in the metabolism of beta-glucan, the main structural component of the cell wall. Acts on lutean, pustulan and 1,6-oligo-beta-D-glucosides. The polypeptide is Probable glucan endo-1,6-beta-glucosidase B (exgB) (Aspergillus flavus (strain ATCC 200026 / FGSC A1120 / IAM 13836 / NRRL 3357 / JCM 12722 / SRRC 167)).